The primary structure comprises 166 residues: NADH-ubiquinone oxidoreductase chain 6 (166 aa).

A run of 5 helical transmembrane segments spans residues 1-21 (MMYF…AFAS), 26-46 (IYGG…IVSL), 47-67 (GGSF…LVVF), 86-106 (TVVL…YEFF), and 139-159 (CGGW…FVVL).

It belongs to the complex I subunit 6 family. As to quaternary structure, core subunit of respiratory chain NADH dehydrogenase (Complex I) which is composed of 45 different subunits.

Its subcellular location is the mitochondrion inner membrane. It catalyses the reaction a ubiquinone + NADH + 5 H(+)(in) = a ubiquinol + NAD(+) + 4 H(+)(out). In terms of biological role, core subunit of the mitochondrial membrane respiratory chain NADH dehydrogenase (Complex I) which catalyzes electron transfer from NADH through the respiratory chain, using ubiquinone as an electron acceptor. Essential for the catalytic activity and assembly of complex I. The polypeptide is NADH-ubiquinone oxidoreductase chain 6 (MT-ND6) (Tachyglossus aculeatus aculeatus (Southeast Australian short-beaked echidna)).